Reading from the N-terminus, the 309-residue chain is MTTTIVLASPNYAANESKFATSLAKFQANSTDASHQRDIHMIDRIAGNLASLTVNAYDRGLLFLDESTTLEEIKAILPKLFAAVHPGAALSVDGVFAKELADAFERESLLAGWMIESKGPFVLRRPAQVEAVPLKLSTKKSAGASVGVKLDFLFKKPEKQNTLSKNDVLKAAQEEEEGEDDLYDEDALVSDEETQLGKDVLAPPSTCSKPGKKKRCKNCTCGQREQDEAEAAAASAAAPKAVKLTDTMEIDFTELLKSKNAVSSCGSCYLGDAFRCSGCPYIGLPAFKPGEQVLISENRDKLSWMADDL.

The segment at 1–132 is N-terminal SAM-like domain; it reads MTTTIVLASP…LRRPAQVEAV (132 aa). A linker region spans residues 133-195; that stretch reads PLKLSTKKSA…DALVSDEETQ (63 aa). Residues C207, C216, C219, and C221 each coordinate [2Fe-2S] cluster. The interval 207–221 is fe-S binding site A; that stretch reads CSKPGKKKRCKNCTC. [4Fe-4S] cluster contacts are provided by C265, C268, C276, and C279. Short sequence motifs (cx2C motif) lie at residues 265 to 268 and 276 to 279; these read CGSC and CSGC. The fe-S binding site B stretch occupies residues 265–279; it reads CGSCYLGDAFRCSGC.

Belongs to the anamorsin family. As to quaternary structure, monomer. Interacts with TAH18. Interacts with MIA40. The cofactor is [2Fe-2S] cluster. [4Fe-4S] cluster serves as cofactor.

Its subcellular location is the cytoplasm. The protein resides in the mitochondrion intermembrane space. Its function is as follows. Component of the cytosolic iron-sulfur (Fe-S) protein assembly (CIA) machinery required for the maturation of extramitochondrial Fe-S proteins. Part of an electron transfer chain functioning in an early step of cytosolic Fe-S biogenesis, facilitating the de novo assembly of a [4Fe-4S] cluster on the scaffold complex CFD1-NBP35. Electrons are transferred to DRE2 from NADPH via the FAD- and FMN-containing protein TAH18. TAH18-DRE2 are also required for the assembly of the diferric tyrosyl radical cofactor of ribonucleotide reductase (RNR), probably by providing electrons for reduction during radical cofactor maturation in the catalytic small subunit RNR2. This is Fe-S cluster assembly protein dre2 from Schizosaccharomyces japonicus (strain yFS275 / FY16936) (Fission yeast).